We begin with the raw amino-acid sequence, 280 residues long: uncharacterized protein (280 aa).

The protein to E.coli YgfZ (UP14) and B.aphidicola (subsp. Acyrthosiphon pisum) BU435.

This is an uncharacterized protein from Haemophilus influenzae (strain ATCC 51907 / DSM 11121 / KW20 / Rd).